Here is a 233-residue protein sequence, read N- to C-terminus: Large ribosomal subunit protein uL1 (233 aa).

The protein belongs to the universal ribosomal protein uL1 family. As to quaternary structure, part of the 50S ribosomal subunit.

Its function is as follows. Binds directly to 23S rRNA. The L1 stalk is quite mobile in the ribosome, and is involved in E site tRNA release. Protein L1 is also a translational repressor protein, it controls the translation of the L11 operon by binding to its mRNA. In Proteus vulgaris, this protein is Large ribosomal subunit protein uL1.